Here is a 1034-residue protein sequence, read N- to C-terminus: Potassium-transporting ATPase alpha chain 1 (1034 aa).

Topologically, residues Met1–Pro97 are cytoplasmic. Phosphotyrosine is present on residues Tyr7 and Tyr10. Residues Leu14–Lys41 form a disordered region. Over residues Met26–Lys39 the composition is skewed to basic residues. A Phosphoserine modification is found at Ser27. A helical transmembrane segment spans residues Glu98–Ala118. Topologically, residues Ala119–Tyr141 are lumenal. Residues Leu142–Phe162 form a helical membrane-spanning segment. Topologically, residues Lys163 to Ile298 are cytoplasmic. The chain crosses the membrane as a helical span at residues Glu299–Val318. The Lumenal segment spans residues Val319–Ala330. A helical transmembrane segment spans residues Met331–Ala348. Val339, Ala340, Val342, and Glu344 together coordinate K(+). The Cytoplasmic portion of the chain corresponds to Thr349 to Leu782. Asp386 acts as the 4-aspartylphosphate intermediate in catalysis. Mg(2+) is bound by residues Asp386 and Thr388. Phosphoserine occurs at positions 462 and 600. Residues Asp727 and Asp731 each contribute to the Mg(2+) site. Residues Lys783–Ile802 form a helical membrane-spanning segment. Residue Glu796 participates in K(+) binding. The Lumenal segment spans residues Tyr803 to Leu812. The helical transmembrane segment at Gly813–Ala833 threads the bilayer. Glu821 serves as a coordination point for K(+). At Tyr834–Arg853 the chain is on the cytoplasmic side. Ser839 carries the post-translational modification Phosphoserine. Residues Leu854–Phe876 form a helical membrane-spanning segment. Residues Ala877–Cys928 are Lumenal-facing. A helical transmembrane segment spans residues Tyr929–Lys948. At Thr949–Asn962 the chain is on the cytoplasmic side. Ser953 is subject to Phosphoserine; by PKA. The chain crosses the membrane as a helical span at residues Lys963–Tyr981. The Lumenal segment spans residues Cys982–Phe996. A helical transmembrane segment spans residues Gln997 to Lys1017. At Leu1018–Tyr1034 the chain is on the cytoplasmic side.

The protein belongs to the cation transport ATPase (P-type) (TC 3.A.3) family. Type IIC subfamily. In terms of assembly, the gastric H(+)/K(+) ATPase pump is composed of the catalytic alpha subunit ATP4A and the regulatory beta subunit ATP4B. Interacts (via the P-domain) with ATP4B (via N-terminus); this interaction stabilizes the lumenal-open E2 conformation state and prevents the reverse reaction of the transport cycle. In terms of tissue distribution, expressed in parietal cells (at protein level).

It localises to the apical cell membrane. It catalyses the reaction K(+)(out) + ATP + H2O + H(+)(in) = K(+)(in) + ADP + phosphate + 2 H(+)(out). Its function is as follows. The catalytic subunit of the gastric H(+)/K(+) ATPase pump which transports H(+) ions in exchange for K(+) ions across the apical membrane of parietal cells. Uses ATP as an energy source to pump H(+) ions to the gastric lumen while transporting K(+) ion from the lumen into the cell. Remarkably generates a million-fold proton gradient across the gastric parietal cell membrane, acidifying the gastric juice down to pH 1. Within a transport cycle, the transfer of a H(+) ion across the membrane is coupled to ATP hydrolysis and is associated with a transient phosphorylation that shifts the pump conformation from inward-facing (E1) to outward-facing state (E2). The release of the H(+) ion in the stomach lumen is followed by binding of K(+) ion converting the pump conformation back to the E1 state. This chain is Potassium-transporting ATPase alpha chain 1, found in Mus musculus (Mouse).